The primary structure comprises 398 residues: Galactose-3-O-sulfotransferase 2 (398 aa).

Residues 1-10 (MMSMLGGLQR) lie on the Cytoplasmic side of the membrane. Residues 11–31 (YFRVILLLLLALTLLLLAGFL) form a helical; Signal-anchor for type II membrane protein membrane-spanning segment. Topologically, residues 32 to 398 (HSDLELDTPL…PLKNIPFLGA (367 aa)) are lumenal. Asn-79, Asn-132, Asn-179, Asn-287, Asn-330, and Asn-360 each carry an N-linked (GlcNAc...) asparagine glycan.

The protein belongs to the galactose-3-O-sulfotransferase family. Ubiquitous. Detected in heart, stomach, colon, liver and spleen, in epithelial cells lining the lower to middle layer of the crypts in colonic mucosa, hepatocytes surrounding the central vein of the liver, extravillous cytotrophoblasts in the basal plate of the septum of the placenta, renal tubules of the kidney, and neuronal cells of the cerebral cortex.

It localises to the golgi apparatus. The protein localises to the golgi stack membrane. It functions in the pathway protein modification; carbohydrate sulfation. With respect to regulation, strongly inhibited by Cu(2+) and Zn(2+). Transfers a sulfate group to the hydroxyl group at C3 of non-reducing beta-galactosyl residues. Acts both on type 1 (Gal-beta-1,3-GlcNAc) and type 2 (Gal-beta-1,4-GlcNAc) chains with similar efficiency. This chain is Galactose-3-O-sulfotransferase 2 (GAL3ST2), found in Homo sapiens (Human).